The chain runs to 382 residues: Threonine synthase (382 aa).

Position 93 is an N6-(pyridoxal phosphate)lysine (Lys93). Pyridoxal 5'-phosphate contacts are provided by residues Asn119, 219 to 223, and Thr347; that span reads GNAGN.

It belongs to the threonine synthase family. Pyridoxal 5'-phosphate is required as a cofactor.

It catalyses the reaction O-phospho-L-homoserine + H2O = L-threonine + phosphate. It functions in the pathway amino-acid biosynthesis; L-threonine biosynthesis; L-threonine from L-aspartate: step 5/5. In terms of biological role, catalyzes the gamma-elimination of phosphate from L-phosphohomoserine and the beta-addition of water to produce L-threonine. The sequence is that of Threonine synthase (thrC) from Synechocystis sp. (strain ATCC 27184 / PCC 6803 / Kazusa).